We begin with the raw amino-acid sequence, 185 residues long: Photosystem I assembly protein Ycf4 (185 aa).

2 helical membrane passes run 20 to 40 (GNFF…SVGA) and 57 to 77 (ILFF…LFIS).

Belongs to the Ycf4 family.

It is found in the plastid. The protein localises to the chloroplast thylakoid membrane. Seems to be required for the assembly of the photosystem I complex. The sequence is that of Photosystem I assembly protein Ycf4 from Lolium perenne (Perennial ryegrass).